The sequence spans 255 residues: 4-hydroxy-tetrahydrodipicolinate reductase (255 aa).

Residues 8–13 (GSTGRM), 88–90 (ATT), and 112–115 (SSNM) each bind NAD(+). Residue His-144 is the Proton donor/acceptor of the active site. His-145 contributes to the (S)-2,3,4,5-tetrahydrodipicolinate binding site. Lys-148 serves as the catalytic Proton donor. 154 to 155 (GT) contacts (S)-2,3,4,5-tetrahydrodipicolinate.

This sequence belongs to the DapB family.

It is found in the cytoplasm. The catalysed reaction is (S)-2,3,4,5-tetrahydrodipicolinate + NAD(+) + H2O = (2S,4S)-4-hydroxy-2,3,4,5-tetrahydrodipicolinate + NADH + H(+). It catalyses the reaction (S)-2,3,4,5-tetrahydrodipicolinate + NADP(+) + H2O = (2S,4S)-4-hydroxy-2,3,4,5-tetrahydrodipicolinate + NADPH + H(+). Its pathway is amino-acid biosynthesis; L-lysine biosynthesis via DAP pathway; (S)-tetrahydrodipicolinate from L-aspartate: step 4/4. In terms of biological role, catalyzes the conversion of 4-hydroxy-tetrahydrodipicolinate (HTPA) to tetrahydrodipicolinate. This chain is 4-hydroxy-tetrahydrodipicolinate reductase, found in Sulfurovum sp. (strain NBC37-1).